The following is a 1094-amino-acid chain: Carbamoyl phosphate synthase large chain (1094 aa).

The interval 1–402 is carboxyphosphate synthetic domain; that stretch reads MPRRSDLHRI…AFQKALRALE (402 aa). Positions 129, 169, 175, 176, 208, 210, 215, 241, 242, 243, 285, and 299 each coordinate ATP. The 196-residue stretch at 133–328 folds into the ATP-grasp 1 domain; that stretch reads GEAMEKIGLR…IARIGAKLAV (196 aa). Mg(2+) is bound by residues Q285, E299, and N301. Positions 285, 299, and 301 each coordinate Mn(2+). Positions 403 to 552 are oligomerization domain; it reads TGRSGWTIAE…YLYGNYDEES (150 aa). The tract at residues 553–936 is carbamoyl phosphate synthetic domain; sequence EAATEGRKKV…AFMKSQLAAD (384 aa). Positions 679 to 870 constitute an ATP-grasp 2 domain; sequence EAIARELGIE…LPSVAARLML (192 aa). ATP-binding residues include R715, R754, L756, E761, G786, I787, H788, S789, Q829, and E841. Residues Q829, E841, and N843 each coordinate Mg(2+). Positions 829, 841, and 843 each coordinate Mn(2+). An MGS-like domain is found at 937–1077; sequence NALPREGTVF…QEWHEILRAP (141 aa). The segment at 937 to 1094 is allosteric domain; the sequence is NALPREGTVF…AGSTQPAGVA (158 aa).

Belongs to the CarB family. As to quaternary structure, composed of two chains; the small (or glutamine) chain promotes the hydrolysis of glutamine to ammonia, which is used by the large (or ammonia) chain to synthesize carbamoyl phosphate. Tetramer of heterodimers (alpha,beta)4. The cofactor is Mg(2+). Requires Mn(2+) as cofactor.

The catalysed reaction is hydrogencarbonate + L-glutamine + 2 ATP + H2O = carbamoyl phosphate + L-glutamate + 2 ADP + phosphate + 2 H(+). It catalyses the reaction hydrogencarbonate + NH4(+) + 2 ATP = carbamoyl phosphate + 2 ADP + phosphate + 2 H(+). The protein operates within amino-acid biosynthesis; L-arginine biosynthesis; carbamoyl phosphate from bicarbonate: step 1/1. It participates in pyrimidine metabolism; UMP biosynthesis via de novo pathway; (S)-dihydroorotate from bicarbonate: step 1/3. In terms of biological role, large subunit of the glutamine-dependent carbamoyl phosphate synthetase (CPSase). CPSase catalyzes the formation of carbamoyl phosphate from the ammonia moiety of glutamine, carbonate, and phosphate donated by ATP, constituting the first step of 2 biosynthetic pathways, one leading to arginine and/or urea and the other to pyrimidine nucleotides. The large subunit (synthetase) binds the substrates ammonia (free or transferred from glutamine from the small subunit), hydrogencarbonate and ATP and carries out an ATP-coupled ligase reaction, activating hydrogencarbonate by forming carboxy phosphate which reacts with ammonia to form carbamoyl phosphate. This Gemmatimonas aurantiaca (strain DSM 14586 / JCM 11422 / NBRC 100505 / T-27) protein is Carbamoyl phosphate synthase large chain.